We begin with the raw amino-acid sequence, 474 residues long: ATP synthase subunit beta (474 aa).

153–160 is an ATP binding site; the sequence is GGAGVGKT.

This sequence belongs to the ATPase alpha/beta chains family. As to quaternary structure, F-type ATPases have 2 components, CF(1) - the catalytic core - and CF(0) - the membrane proton channel. CF(1) has five subunits: alpha(3), beta(3), gamma(1), delta(1), epsilon(1). CF(0) has three main subunits: a(1), b(2) and c(9-12). The alpha and beta chains form an alternating ring which encloses part of the gamma chain. CF(1) is attached to CF(0) by a central stalk formed by the gamma and epsilon chains, while a peripheral stalk is formed by the delta and b chains.

The protein localises to the cell inner membrane. The enzyme catalyses ATP + H2O + 4 H(+)(in) = ADP + phosphate + 5 H(+)(out). Its function is as follows. Produces ATP from ADP in the presence of a proton gradient across the membrane. The catalytic sites are hosted primarily by the beta subunits. This is ATP synthase subunit beta from Rickettsia typhi (strain ATCC VR-144 / Wilmington).